A 364-amino-acid chain; its full sequence is Histidinol-phosphate aminotransferase (364 aa).

N6-(pyridoxal phosphate)lysine is present on Lys-226.

The protein belongs to the class-II pyridoxal-phosphate-dependent aminotransferase family. Histidinol-phosphate aminotransferase subfamily. Homodimer. Pyridoxal 5'-phosphate serves as cofactor.

The enzyme catalyses L-histidinol phosphate + 2-oxoglutarate = 3-(imidazol-4-yl)-2-oxopropyl phosphate + L-glutamate. It participates in amino-acid biosynthesis; L-histidine biosynthesis; L-histidine from 5-phospho-alpha-D-ribose 1-diphosphate: step 7/9. In Sulfurimonas denitrificans (strain ATCC 33889 / DSM 1251) (Thiomicrospira denitrificans (strain ATCC 33889 / DSM 1251)), this protein is Histidinol-phosphate aminotransferase.